The chain runs to 504 residues: ATP synthase subunit alpha, chloroplastic (504 aa).

An ATP-binding site is contributed by 170 to 177; that stretch reads GDRQTGKT.

Belongs to the ATPase alpha/beta chains family. As to quaternary structure, F-type ATPases have 2 components, CF(1) - the catalytic core - and CF(0) - the membrane proton channel. CF(1) has five subunits: alpha(3), beta(3), gamma(1), delta(1), epsilon(1). CF(0) has four main subunits: a, b, b' and c.

It is found in the plastid. The protein resides in the chloroplast thylakoid membrane. The catalysed reaction is ATP + H2O + 4 H(+)(in) = ADP + phosphate + 5 H(+)(out). Its function is as follows. Produces ATP from ADP in the presence of a proton gradient across the membrane. The alpha chain is a regulatory subunit. This Hordeum vulgare (Barley) protein is ATP synthase subunit alpha, chloroplastic.